The chain runs to 48 residues: M-oxotoxin-Ot1c (48 aa).

The protein resides in the secreted. It localises to the target cell membrane. Functionally, disrupts cell membranes, particularly those rich in phosphocholine, through formation of pores. Has antimicrobial activity, hemolytic activity and insecticidal activity. The chain is M-oxotoxin-Ot1c from Oxyopes takobius (Lynx spider).